A 190-amino-acid chain; its full sequence is Crossover junction endodeoxyribonuclease RuvC (190 aa).

Active-site residues include Asp-8, Glu-67, and Asp-139. Asp-8, Glu-67, and Asp-139 together coordinate Mg(2+).

It belongs to the RuvC family. As to quaternary structure, homodimer which binds Holliday junction (HJ) DNA. The HJ becomes 2-fold symmetrical on binding to RuvC with unstacked arms; it has a different conformation from HJ DNA in complex with RuvA. In the full resolvosome a probable DNA-RuvA(4)-RuvB(12)-RuvC(2) complex forms which resolves the HJ. Mg(2+) is required as a cofactor.

The protein resides in the cytoplasm. It carries out the reaction Endonucleolytic cleavage at a junction such as a reciprocal single-stranded crossover between two homologous DNA duplexes (Holliday junction).. In terms of biological role, the RuvA-RuvB-RuvC complex processes Holliday junction (HJ) DNA during genetic recombination and DNA repair. Endonuclease that resolves HJ intermediates. Cleaves cruciform DNA by making single-stranded nicks across the HJ at symmetrical positions within the homologous arms, yielding a 5'-phosphate and a 3'-hydroxyl group; requires a central core of homology in the junction. The consensus cleavage sequence is 5'-(A/T)TT(C/G)-3'. Cleavage occurs on the 3'-side of the TT dinucleotide at the point of strand exchange. HJ branch migration catalyzed by RuvA-RuvB allows RuvC to scan DNA until it finds its consensus sequence, where it cleaves and resolves the cruciform DNA. The polypeptide is Crossover junction endodeoxyribonuclease RuvC (Haemophilus influenzae (strain PittGG)).